We begin with the raw amino-acid sequence, 361 residues long: Phospho-N-acetylmuramoyl-pentapeptide-transferase (361 aa).

The next 10 membrane-spanning stretches (helical) occupy residues 25-45, 73-93, 98-118, 139-159, 168-188, 200-220, 237-257, 264-284, 289-309, and 339-359; these read RGILAALTALFLSLWMGPAVI, TMGGSLILLTVTLSVLLWGDL, VWLVLAVMICFGAIGWYDDWI, IFGLAAGLFLYYTADVPAAIT, IALPLAGVSFVVIAYFWIVGF, GLAIMPTVLVACALGVFAYAS, AGELIIICSAIAGAGLGFLWF, VFMGDIGALSLGAVLGTVAVI, LVLVIMGGVFVIETLSVMIQV, and VIVRFWIISVVLVLIGLATLK.

It belongs to the glycosyltransferase 4 family. MraY subfamily. Mg(2+) serves as cofactor.

The protein localises to the cell inner membrane. The catalysed reaction is UDP-N-acetyl-alpha-D-muramoyl-L-alanyl-gamma-D-glutamyl-meso-2,6-diaminopimeloyl-D-alanyl-D-alanine + di-trans,octa-cis-undecaprenyl phosphate = di-trans,octa-cis-undecaprenyl diphospho-N-acetyl-alpha-D-muramoyl-L-alanyl-D-glutamyl-meso-2,6-diaminopimeloyl-D-alanyl-D-alanine + UMP. Its pathway is cell wall biogenesis; peptidoglycan biosynthesis. Catalyzes the initial step of the lipid cycle reactions in the biosynthesis of the cell wall peptidoglycan: transfers peptidoglycan precursor phospho-MurNAc-pentapeptide from UDP-MurNAc-pentapeptide onto the lipid carrier undecaprenyl phosphate, yielding undecaprenyl-pyrophosphoryl-MurNAc-pentapeptide, known as lipid I. The chain is Phospho-N-acetylmuramoyl-pentapeptide-transferase from Xanthomonas campestris pv. campestris (strain 8004).